We begin with the raw amino-acid sequence, 326 residues long: GTP 3',8-cyclase (326 aa).

Positions 4–227 (KHERNINYMR…LTPQKNILGN (224 aa)) constitute a Radical SAM core domain. Arg13 is a binding site for GTP. 2 residues coordinate [4Fe-4S] cluster: Cys20 and Cys24. Tyr26 serves as a coordination point for S-adenosyl-L-methionine. Cys27 serves as a coordination point for [4Fe-4S] cluster. A GTP-binding site is contributed by Arg63. Gly67 lines the S-adenosyl-L-methionine pocket. A GTP-binding site is contributed by Thr94. Ser118 lines the S-adenosyl-L-methionine pocket. Lys155 contacts GTP. S-adenosyl-L-methionine is bound at residue Met189. Cys253 and Cys256 together coordinate [4Fe-4S] cluster. Residue 258–260 (RIR) coordinates GTP. Cys270 lines the [4Fe-4S] cluster pocket.

The protein belongs to the radical SAM superfamily. MoaA family. Monomer and homodimer. The cofactor is [4Fe-4S] cluster.

The enzyme catalyses GTP + AH2 + S-adenosyl-L-methionine = (8S)-3',8-cyclo-7,8-dihydroguanosine 5'-triphosphate + 5'-deoxyadenosine + L-methionine + A + H(+). Its pathway is cofactor biosynthesis; molybdopterin biosynthesis. In terms of biological role, catalyzes the cyclization of GTP to (8S)-3',8-cyclo-7,8-dihydroguanosine 5'-triphosphate. The sequence is that of GTP 3',8-cyclase from Syntrophomonas wolfei subsp. wolfei (strain DSM 2245B / Goettingen).